A 77-amino-acid polypeptide reads, in one-letter code: Exodeoxyribonuclease 7 small subunit (77 aa).

Belongs to the XseB family. As to quaternary structure, heterooligomer composed of large and small subunits.

It localises to the cytoplasm. It carries out the reaction Exonucleolytic cleavage in either 5'- to 3'- or 3'- to 5'-direction to yield nucleoside 5'-phosphates.. In terms of biological role, bidirectionally degrades single-stranded DNA into large acid-insoluble oligonucleotides, which are then degraded further into small acid-soluble oligonucleotides. The sequence is that of Exodeoxyribonuclease 7 small subunit from Clostridium acetobutylicum (strain ATCC 824 / DSM 792 / JCM 1419 / IAM 19013 / LMG 5710 / NBRC 13948 / NRRL B-527 / VKM B-1787 / 2291 / W).